The primary structure comprises 207 residues: Thiamine-phosphate synthase (207 aa).

Residues 36-40 and Asn-68 contribute to the 4-amino-2-methyl-5-(diphosphooxymethyl)pyrimidine site; that span reads QLRMK. 2 residues coordinate Mg(2+): Asp-69 and Asp-88. A 4-amino-2-methyl-5-(diphosphooxymethyl)pyrimidine-binding site is contributed by Ser-106. 2-[(2R,5Z)-2-carboxy-4-methylthiazol-5(2H)-ylidene]ethyl phosphate is bound at residue 132 to 134; that stretch reads TNT. 4-amino-2-methyl-5-(diphosphooxymethyl)pyrimidine is bound at residue Lys-135. Residues Gly-162 and 182 to 183 each bind 2-[(2R,5Z)-2-carboxy-4-methylthiazol-5(2H)-ylidene]ethyl phosphate; that span reads VS.

The protein belongs to the thiamine-phosphate synthase family. It depends on Mg(2+) as a cofactor.

It carries out the reaction 2-[(2R,5Z)-2-carboxy-4-methylthiazol-5(2H)-ylidene]ethyl phosphate + 4-amino-2-methyl-5-(diphosphooxymethyl)pyrimidine + 2 H(+) = thiamine phosphate + CO2 + diphosphate. It catalyses the reaction 2-(2-carboxy-4-methylthiazol-5-yl)ethyl phosphate + 4-amino-2-methyl-5-(diphosphooxymethyl)pyrimidine + 2 H(+) = thiamine phosphate + CO2 + diphosphate. The catalysed reaction is 4-methyl-5-(2-phosphooxyethyl)-thiazole + 4-amino-2-methyl-5-(diphosphooxymethyl)pyrimidine + H(+) = thiamine phosphate + diphosphate. Its pathway is cofactor biosynthesis; thiamine diphosphate biosynthesis; thiamine phosphate from 4-amino-2-methyl-5-diphosphomethylpyrimidine and 4-methyl-5-(2-phosphoethyl)-thiazole: step 1/1. Its function is as follows. Condenses 4-methyl-5-(beta-hydroxyethyl)thiazole monophosphate (THZ-P) and 2-methyl-4-amino-5-hydroxymethyl pyrimidine pyrophosphate (HMP-PP) to form thiamine monophosphate (TMP). The polypeptide is Thiamine-phosphate synthase (Methanococcus maripaludis (strain C6 / ATCC BAA-1332)).